The chain runs to 695 residues: Elongation factor G 2 (695 aa).

The 276-residue stretch at Ser-5 to Thr-280 folds into the tr-type G domain. GTP is bound by residues Ala-14–Thr-21, Asp-78–His-82, and Asn-132–Asp-135.

It belongs to the TRAFAC class translation factor GTPase superfamily. Classic translation factor GTPase family. EF-G/EF-2 subfamily.

The protein localises to the cytoplasm. In terms of biological role, catalyzes the GTP-dependent ribosomal translocation step during translation elongation. During this step, the ribosome changes from the pre-translocational (PRE) to the post-translocational (POST) state as the newly formed A-site-bound peptidyl-tRNA and P-site-bound deacylated tRNA move to the P and E sites, respectively. Catalyzes the coordinated movement of the two tRNA molecules, the mRNA and conformational changes in the ribosome. The sequence is that of Elongation factor G 2 from Vibrio vulnificus (strain YJ016).